A 178-amino-acid polypeptide reads, in one-letter code: Ras-like protein (178 aa).

1–6 (GGVGKS) provides a ligand contact to GTP. The Effector region motif lies at 21–29 (YDPTIEDSY). Residues 46 to 50 (DTAGQ) and 105 to 108 (NKCD) contribute to the GTP site. Cysteine methyl ester is present on Cys175. The S-geranylgeranyl cysteine moiety is linked to residue Cys175. Residues 176 to 178 (SIL) constitute a propeptide, removed in mature form.

The protein belongs to the small GTPase superfamily. Ras family.

It is found in the cell membrane. The catalysed reaction is GTP + H2O = GDP + phosphate + H(+). Its activity is regulated as follows. Alternates between an inactive form bound to GDP and an active form bound to GTP. Activated by a guanine nucleotide-exchange factor (GEF) and inactivated by a GTPase-activating protein (GAP). Ras proteins bind GDP/GTP and possess intrinsic GTPase activity. This is Ras-like protein from Artemia salina (Brine shrimp).